Reading from the N-terminus, the 526-residue chain is Amino acid transporter heavy chain SLC3A2 (526 aa).

Residues 1–31 are disordered; it reads MSQDTEVDMKDVELNELEPEKQPMNAADGAA. Residues 1-75 lie on the Cytoplasmic side of the membrane; the sequence is MSQDTEVDMK…AGSPGWVRTR (75 aa). Phosphoserine is present on S2. Position 5 is a phosphothreonine (T5). Positions 7-21 are enriched in basic and acidic residues; it reads VDMKDVELNELEPEK. K42 participates in a covalent cross-link: Glycyl lysine isopeptide (Lys-Gly) (interchain with G-Cter in ubiquitin). A Phosphoserine modification is found at S58. A Glycyl lysine isopeptide (Lys-Gly) (interchain with G-Cter in SUMO2) cross-link involves residue K59. The helical; Signal-anchor for type II membrane protein transmembrane segment at 76–99 threads the bilayer; it reads WALLLLFWLGWLGMLAGAVVIIVR. At 100-526 the chain is on the extracellular side; it reads APRCRELPVQ…GLLLQFPFVA (427 aa). N-linked (GlcNAc...) asparagine glycosylation is found at N166, N259, and N263. S300 is subject to Phosphoserine. N-linked (GlcNAc...) asparagine glycosylation occurs at N301. S302 carries the phosphoserine modification. Residues N318, N385, and N399 are each glycosylated (N-linked (GlcNAc...) asparagine). The residue at position 420 (S420) is a Phosphoserine. An N-linked (GlcNAc...) asparagine glycan is attached at N509.

It belongs to the SLC3A transporter family. As to quaternary structure, disulfide-linked heterodimer with a non-glycosylated light chain (SLC7A5, SLC7A6, SLC7A7, SLC7A8, SLC7A10 or SLC7A11). Interacts with TLCD3A/CT120 and ICAM1. Constitutively and specifically associates with beta-1 integrins (alpha-2/beta-1, alpha-3/beta-1, alpha-5/beta-1 and alpha-6/beta-1), but minimally with alpha-4/beta-1. Interacts with LAPTM4B; recruits SLC3A2 and SLC7A5 to lysosomes to promote leucine uptake into these organelles and is required for mTORC1 activation. Post-translationally, phosphorylation on Ser-300 or Ser-302 and on Ser-420 by ecto-protein kinases favors heterotypic cell-cell interactions. N-glycosylated; N-glycosylation is crucial for trafficking and stability of SLC3A2 to the plasma membrane. As to expression, detected on the surface of embryonic epithelial cells in the epidermis, thymus, kidney, intestine, brain choroid plexus, and in retina. Detected in adult and embryonic brain, spleen, kidney, intestine and liver, and in adult testis (at protein level). Observed in all adult tissues tested with strongest expression in kidney, small intestine, spleen, thymus and liver. Moderate expression in brain, stomach, heart, testis, lung, skin, pancreas and skeletal muscle. In brain expressed on capillary endothelia in cerebral cortex.

It localises to the apical cell membrane. The protein resides in the cell membrane. It is found in the cell junction. Its subcellular location is the lysosome membrane. The protein localises to the melanosome. It localises to the basolateral cell membrane. In terms of biological role, acts as a chaperone that facilitates biogenesis and trafficking of functional transporters heterodimers to the plasma membrane. Forms heterodimer with SLC7 family transporters (SLC7A5, SLC7A6, SLC7A7, SLC7A8, SLC7A10 and SLC7A11), a group of amino-acid antiporters. Heterodimers function as amino acids exchangers, the specificity of the substrate depending on the SLC7A subunit. Heterodimers SLC3A2/SLC7A6 or SLC3A2/SLC7A7 mediate the uptake of dibasic amino acids. Heterodimer SLC3A2/SLC7A11 functions as an antiporter by mediating the exchange of extracellular anionic L-cystine and intracellular L-glutamate across the cellular plasma membrane. SLC3A2/SLC7A10 translocates small neutral L- and D-amino acids across the plasma membrane. SLC3A2/SLC75 or SLC3A2/SLC7A8 translocates neutral amino acids with broad specificity, thyroid hormones and L-DOPA. SLC3A2 is essential for plasma membrane localization, stability, and the transport activity of SLC7A5 and SLC7A8. When associated with LAPTM4B, the heterodimer SLC7A5 is recruited to lysosomes to promote leucine uptake into these organelles, and thereby mediates mTORC1 activation. Modulates integrin-related signaling and is essential for integrin-dependent cell spreading, migration and tumor progression. The polypeptide is Amino acid transporter heavy chain SLC3A2 (Mus musculus (Mouse)).